Consider the following 43-residue polypeptide: Protein PsbN (43 aa).

Residues 7 to 29 form a helical membrane-spanning segment; it reads ITIFLSGLLVSFTGYALYTAFGQ.

This sequence belongs to the PsbN family.

The protein resides in the plastid membrane. In terms of biological role, may play a role in photosystem I and II biogenesis. The polypeptide is Protein PsbN (Cuscuta reflexa (Southern Asian dodder)).